The primary structure comprises 108 residues: Resistin (108 aa).

An N-terminal signal peptide occupies residues 1–18 (MKALCLLLLPVLGLLVSS). 5 disulfide bridges follow: C51–C104, C63–C103, C72–C89, C74–C91, and C78–C93.

The protein belongs to the resistin/FIZZ family. Homodimer; disulfide-linked. Interacts with DEFA1. As to expression, expressed in white adipose tissue (at protein level). Widely expressed, with particularly strong expression in lung, bone marrow, breast and peripheral blood. Expressed strongly in bone marrow and at lower levels in lung, but not detected in other tissues. Isoform 2 is detected in adipose tissue, bone marrow, brain, lung, peripheral blood, placenta and thymus.

The protein localises to the secreted. Hormone that seems to suppress insulin ability to stimulate glucose uptake into adipose cells. Potentially links obesity to diabetes. Promotes chemotaxis in myeloid cells. This Homo sapiens (Human) protein is Resistin (RETN).